A 2100-amino-acid polypeptide reads, in one-letter code: MKSQEQQTPETREKSSSTSESGHPISLDSKTPPPNDSKIESIVKAQILFLLSTLREDQYDTKLEQIRQLINKNAPRVYHHFLRRLIQGNSYRIFGTGKSSDGLATYKLLLDELKSLTKSWVMAKRFSDAISGSDSEVFEDFDIEAFLDHFQFSPLERTNLLIGLTTSVKPTLAKKASALLKNTFQSLLNQLSDPTQQQSIDKNDLDLLREGLFTTDYDRIPLIKVPKFDAIIEKKLANSRPLTALFGPMKASKATLKSMKEAILKKYPPGTATETDVAYLINSLVAIHDYGAWDTVLMGKAIVSSFENLNWEAMLSMFDNPKFMITGTPSLVLFFTIFTNAYKLRQTNFTLDFLWVLWRNPLPQLSIISHIILSPTSMFDIREFNVNPVVSVDSLKDYSEELVNYAKIYEKSNLNCIELVQILLRLLSEVVTYETSLFLNFLDEKVSAELLLLGTLQLPLAWNPVQESLAFQWCSDFFSNFKEHKFVFVRIERTNPQFLFAFLRSLWLKDSSSVNQVVEFIIENDFTSHIGNIQPNRFALEIAALAAARKALSFQDWLDKKMLEFEDADGLNVFLVEVLDFLMSRAALQKNESEQKEESVVLSIDTVNVLLTTLMDNVSISEEVSEHIKDVQILCLQVYPRLFSLGHDRDSIVIATNTTNSFSPDVESEVESYFQALYERRISIGKIVLTLQNFKKSENPRDLDLFACLQHSLFDEYRFFPDYPLEALALTAVLFGSLIQFELLSFVPLGVALRYVYQALLMPTDSKMFRFGMQALVQFQEKLPKYINYCNLILGIPSLQLVRPDIYDSIREMIASNENTEVEKDKLDSFSALANPASPKAPEYTFVSIHVPPLNVPNAEGEIEESVCDNILFAINNLSQLNFNEKLKDVKDNLTPAYLPWFSHYIVTQRVSREANFLSLYGKFLEELKSSDLYKIVFRDTLQAILDIMNNNAETLSPSEKTNLKNLGSWLGSITLLRNKPITTLQVSFKDLLLEGIDSGRIDRVLPFVCKVLEKASSSVIFKPPNPWLMGILKLLVELYQFADFRLNLKFEIELLLNNLNVKMDNIEPSEMYRNHLVQKADLEKELPEDVLNAEFPDGTDVITQYIVAASSQITVTDAVAQVFGKPKPAIKNITQLIIQQSVLEIISAVVRRSVGIAAITTKSLLQKDFAAESNPSRLLLAARQMAKTLAGNLAMVTCREPLQMLMINNFRTIALQDVENVHAAVAQAIDELVSQNLFVASSVIESVASETAIAEIDAEIEHMIVERVRHRKTTPNLPFVDPAGAANLHLNLPSVLKLSSELTPQQFQLYENFDRLSLSTIMSNNSFTSLNGLRTDSADSTDALNSNLNNTVENEANQTALNYARNLLIIIGQLFQLAAQMPYTSMQEVPADHELHELVNQFLTGVASINHPIADHVFLLCAQECCRILLTDSKSPFILEVFSAILEYICQASTKTAINVSLYWNFSNDLEKLNLPIILSLIRFGILTSGEVDYHVARGVRSEQGSGPVTDFAIELLRTAVGGENPMALPGNFVNSITSLYEISESFSGETKQAYEQLVETMNKSVSPASEILSDLDNKQQLNDQIIIVFVSWVHLLRNSATNDETKAAFVYQLHKQGILSEPELCIQFFRCNLEAVLVAFLEAASVNAPDYFNVDAYASLLVNVVKYTEGSTEGTVSSKSVLFRKIIALIIGVFAELHNSMAEFVHQKTFFRLFSSILSELDDAKDVLESCFVDIYSVILECFLAIQPRSFPAFTFAWLSLISHSYLLPKVLLVNNDKINDLFSEILMSFLKFLDLKDDIDKAQFKLLYNGFLRIILVLLHDFPGFLATHCYQLIPYIPLECVQLRNMVLSAFPSDLHLPDPFAQGLKVGRLPEVTRAPLISNSVSASLEKFASALDLEACFSSSKPAEVAKLLLEVYSSQDTPTKLNEWANYFMLCLIRHATRDSPAKQAPQFQSKSPECVIISTMNRSCDSKCRYFLLTAIANQLRYPSSHTYYASCCFLYLFKSSSNNPQELLIKEQMTTVLLERIICNRPHPWGLLITFTELLKNEDYNFWKHPYIKRNDEICRLFDSLHEHVMAPSSANNVSTEEATELMGQV.

Residues 1 to 36 (MKSQEQQTPETREKSSSTSESGHPISLDSKTPPPND) form a disordered region. 2 positions are modified to phosphoserine: Ser1341 and Ser1568.

The protein resides in the cytoplasm. It localises to the nucleus. Its function is as follows. Acts as a component of the CCR4-NOT core complex, which in the nucleus seems to be a general transcription factor, and in the cytoplasm the major mRNA deadenylase involved in mRNA turnover. The NOT protein subcomplex negatively regulates the basal and activated transcription of many genes. Preferentially affects TC-type TATA element-dependent transcription. Could directly or indirectly inhibit component(s) of the general transcription machinery. The chain is General negative regulator of transcription subunit 1 (not1) from Schizosaccharomyces pombe (strain 972 / ATCC 24843) (Fission yeast).